Reading from the N-terminus, the 915-residue chain is Probable inorganic carbon transporter subunit DabA (915 aa).

The Zn(2+) site is built by Cys392, Asp394, His566, and Cys581.

This sequence belongs to the inorganic carbon transporter (TC 9.A.2) DabA family. As to quaternary structure, forms a complex with DabB. Zn(2+) serves as cofactor.

The protein localises to the cell inner membrane. Functionally, part of an energy-coupled inorganic carbon pump. This chain is Probable inorganic carbon transporter subunit DabA, found in Nitrosospira multiformis (strain ATCC 25196 / NCIMB 11849 / C 71).